We begin with the raw amino-acid sequence, 619 residues long: UPF0329 protein ECU01_0100/ECU01_1510/ECU08_0030 (619 aa).

The span at 350–384 shows a compositional bias: basic and acidic residues; it reads REEREKREKREKREESKGRGKRGAGEAKEESKEED. Positions 350 to 428 are disordered; that stretch reads REEREKREKR…GKRKGDGHHY (79 aa). Acidic residues predominate over residues 385–399; the sequence is GKEEEGVEAEEEESA. Positions 411-428 are enriched in basic residues; the sequence is ARRKKSLKGKRKGDGHHY.

Belongs to the UPF0329 family.

This chain is UPF0329 protein ECU01_0100/ECU01_1510/ECU08_0030, found in Encephalitozoon cuniculi (strain GB-M1) (Microsporidian parasite).